Consider the following 1092-residue polypeptide: Probable arabinosyltransferase A (1092 aa).

13 helical membrane passes run 21 to 43 (IARL…VPLL), 214 to 233 (AVMV…LALL), 249 to 271 (GLWT…IVGA), 324 to 346 (VWMR…RCVL), 353 to 372 (VAAN…AAWL), 382 to 399 (PLIA…ENSI), 404 to 426 (LWPA…QGLI), 517 to 534 (FAVL…MVLL), 541 to 563 (GAVS…LLIL), 568 to 590 (WAIQ…AFAF), 602 to 624 (ALYV…GWFY), 639 to 661 (IAHY…LAGW), and 682 to 704 (ALAS…GSMV). The segment at 772 to 798 (PSGVSEHLEPEPVGTNPGTPNSEGPVD) is disordered.

Belongs to the emb family.

The protein resides in the cell membrane. Arabinosyl transferase responsible for the polymerization of arabinose into the arabinan of arabinogalactan. In Mycolicibacterium smegmatis (Mycobacterium smegmatis), this protein is Probable arabinosyltransferase A (embA).